A 100-amino-acid polypeptide reads, in one-letter code: Aspartyl/glutamyl-tRNA(Asn/Gln) amidotransferase subunit C (100 aa).

Belongs to the GatC family. Heterotrimer of A, B and C subunits.

The enzyme catalyses L-glutamyl-tRNA(Gln) + L-glutamine + ATP + H2O = L-glutaminyl-tRNA(Gln) + L-glutamate + ADP + phosphate + H(+). The catalysed reaction is L-aspartyl-tRNA(Asn) + L-glutamine + ATP + H2O = L-asparaginyl-tRNA(Asn) + L-glutamate + ADP + phosphate + 2 H(+). Functionally, allows the formation of correctly charged Asn-tRNA(Asn) or Gln-tRNA(Gln) through the transamidation of misacylated Asp-tRNA(Asn) or Glu-tRNA(Gln) in organisms which lack either or both of asparaginyl-tRNA or glutaminyl-tRNA synthetases. The reaction takes place in the presence of glutamine and ATP through an activated phospho-Asp-tRNA(Asn) or phospho-Glu-tRNA(Gln). This is Aspartyl/glutamyl-tRNA(Asn/Gln) amidotransferase subunit C from Corynebacterium aurimucosum (strain ATCC 700975 / DSM 44827 / CIP 107346 / CN-1) (Corynebacterium nigricans).